The following is a 433-amino-acid chain: DNA methyltransferase 1-associated protein 1 (433 aa).

Residues 1 to 204 (MSADVRDILD…EVVALLAKAK (204 aa)) are required for nuclear localization. In terms of domain architecture, Myb-like spans 148-197 (NNWSKVQTDHLFDLARRFDLRFIVMADRWNRQQHGTKTVEELKERYYEVV). The stretch at 186-281 (VEELKERYYE…ADQQNEHASN (96 aa)) forms a coiled coil. Basic and acidic residues predominate over residues 252–264 (EARKKERERKTQD). Positions 252 to 305 (EARKKERERKTQDLQKLISQADQQNEHASNTPSTRKYEKKLHKKKVHQQPRPSR) are disordered. A compositionally biased stretch (polar residues) spans 268-285 (LISQADQQNEHASNTPST). Residues 288 to 299 (YEKKLHKKKVHQ) show a composition bias toward basic residues.

Interacts with Rel. Interacts with akirin and Bap55.

The protein resides in the nucleus. The protein localises to the cytoplasm. In terms of biological role, involved in transcription repression and activation. Required for larvae and pupal development, and for normal innate immune responses. Involved in modulating the activation of the immune deficiency pathway (Imd), acting either downstream of, or at the level of, the NF-kappa-B factor Rel. Possibly functions with akirin to regulate Rel, and its interaction with the Brahma complex protein Bap55 suggests that it may regulate the IMD pathway at the level of chromatin remodeling. This is DNA methyltransferase 1-associated protein 1 from Drosophila melanogaster (Fruit fly).